The sequence spans 359 residues: UDP-3-O-acylglucosamine N-acyltransferase (359 aa).

The active-site Proton acceptor is the H256.

Belongs to the transferase hexapeptide repeat family. LpxD subfamily. As to quaternary structure, homotrimer.

The catalysed reaction is a UDP-3-O-[(3R)-3-hydroxyacyl]-alpha-D-glucosamine + a (3R)-hydroxyacyl-[ACP] = a UDP-2-N,3-O-bis[(3R)-3-hydroxyacyl]-alpha-D-glucosamine + holo-[ACP] + H(+). It participates in bacterial outer membrane biogenesis; LPS lipid A biosynthesis. In terms of biological role, catalyzes the N-acylation of UDP-3-O-acylglucosamine using 3-hydroxyacyl-ACP as the acyl donor. Is involved in the biosynthesis of lipid A, a phosphorylated glycolipid that anchors the lipopolysaccharide to the outer membrane of the cell. The polypeptide is UDP-3-O-acylglucosamine N-acyltransferase (Rhodopseudomonas palustris (strain HaA2)).